The sequence spans 268 residues: 3-methyl-2-oxobutanoate hydroxymethyltransferase (268 aa).

Residues Asp44 and Asp83 each contribute to the Mg(2+) site. 3-methyl-2-oxobutanoate contacts are provided by residues 44–45, Asp83, and Lys113; that span reads DS. Glu115 contributes to the Mg(2+) binding site. Glu182 functions as the Proton acceptor in the catalytic mechanism.

Belongs to the PanB family. Homodecamer; pentamer of dimers. Requires Mg(2+) as cofactor.

The protein resides in the cytoplasm. The catalysed reaction is 3-methyl-2-oxobutanoate + (6R)-5,10-methylene-5,6,7,8-tetrahydrofolate + H2O = 2-dehydropantoate + (6S)-5,6,7,8-tetrahydrofolate. Its pathway is cofactor biosynthesis; (R)-pantothenate biosynthesis; (R)-pantoate from 3-methyl-2-oxobutanoate: step 1/2. Its function is as follows. Catalyzes the reversible reaction in which hydroxymethyl group from 5,10-methylenetetrahydrofolate is transferred onto alpha-ketoisovalerate to form ketopantoate. This is 3-methyl-2-oxobutanoate hydroxymethyltransferase from Synechococcus elongatus (strain ATCC 33912 / PCC 7942 / FACHB-805) (Anacystis nidulans R2).